Reading from the N-terminus, the 50-residue chain is Sproutin (50 aa).

A Phosphoserine; by PKC modification is found at serine 8.

As to expression, brain.

Functionally, neurite outgrowth factor. The chain is Sproutin from Rattus norvegicus (Rat).